Consider the following 458-residue polypeptide: Bone morphogenetic protein 3 (458 aa).

A signal peptide spans 1–23 (MAECRPWLVLWVGCCGCLCLALG). Residues 24–348 (ELLNDGLLAV…EQTLKKARRK (325 aa)) constitute a propeptide that is removed on maturation. A glycan (N-linked (GlcNAc...) asparagine) is linked at Asn-107. 2 disordered regions span residues 244-275 (DSVV…KKRS) and 303-335 (ERKP…SQTL). Positions 320 to 329 (NKKKLRKGSR) are enriched in basic residues. 3 disulfides stabilise this stretch: Cys-356–Cys-423, Cys-385–Cys-455, and Cys-389–Cys-457. Asn-449 carries N-linked (GlcNAc...) asparagine glycosylation.

The protein belongs to the TGF-beta family. Homodimer. Can form heterodimers with ADMP, BMP-2-I and/or BMP-2-II, and DERRIERE.

The protein resides in the secreted. Functionally, dorsalizing factor. Antagonizes mesoderm formation by ventralizing BMPs. The polypeptide is Bone morphogenetic protein 3 (bmp3) (Xenopus laevis (African clawed frog)).